Reading from the N-terminus, the 494-residue chain is UPF0371 protein SUB1165 (494 aa).

The protein belongs to the UPF0371 family.

The polypeptide is UPF0371 protein SUB1165 (Streptococcus uberis (strain ATCC BAA-854 / 0140J)).